We begin with the raw amino-acid sequence, 414 residues long: Cytochrome c biogenesis protein Ccs1 (414 aa).

A run of 3 helical transmembrane segments spans residues 14 to 34 (LTVA…GTVI), 73 to 93 (SWWF…CTIT), and 159 to 179 (VSPI…MLST).

Belongs to the Ccs1/CcsB family. May interact with CcsA.

It is found in the plastid. The protein resides in the chloroplast thylakoid membrane. Required during biogenesis of c-type cytochromes (cytochrome c6 and cytochrome f) at the step of heme attachment. The protein is Cytochrome c biogenesis protein Ccs1 of Guillardia theta (Cryptophyte).